The sequence spans 477 residues: Histone-lysine N-methyltransferase SUV39H2 (477 aa).

Positions 1–59 (MATARAKARGSEAGARCHRAPGPPPRPKARRTARRRRAETLTARRSRPSAGERRAGSQR) are disordered. A compositionally biased stretch (basic residues) spans 27–37 (PKARRTARRRR). The Chromo domain maps to 118-176 (YEVEYLCDYKVAKGVEYYLVKWKGWPDSTNTWEPLRNLRCPQLLRQFSDDKKTYLAQER). Positions 256-314 (FGCSCTDCFFDKCCPAEAGVVLAYNKKQQIKIQPGTPIYECNSRCRCGPECPNRIVQKG) constitute a Pre-SET domain. 9 residues coordinate Zn(2+): cysteine 258, cysteine 260, cysteine 263, cysteine 268, cysteine 269, cysteine 296, cysteine 300, cysteine 302, and cysteine 306. The 124-residue stretch at 317–440 (YSLCIFKTSN…AGEELTFDYQ (124 aa)) folds into the SET domain. Residues 328 to 330 (CGW), tyrosine 371, and 397 to 398 (NH) each bind S-adenosyl-L-methionine. Cysteine 400 serves as a coordination point for Zn(2+). Serine 448, serine 451, and serine 455 each carry phosphoserine. The Post-SET domain occupies 461–477 (VRTQCKCGAETCRGYLN). Residues cysteine 465, cysteine 467, and cysteine 472 each contribute to the Zn(2+) site.

It belongs to the class V-like SAM-binding methyltransferase superfamily. Histone-lysine methyltransferase family. Suvar3-9 subfamily. As to quaternary structure, interacts with SMAD5. The large PER complex involved in the histone methylation is composed of at least PER2, CBX3, TRIM28, SUV39H1 and/or SUV39H2; CBX3 mediates the formation of the complex. In terms of processing, ubiquitinated by the DCX(DCAF13) E3 ubiquitin ligase complex, leading to its degradation. In terms of tissue distribution, testis specific; predominant expression in type B spermatogonia and preleptotene spermatocytes.

Its subcellular location is the nucleus. It is found in the chromosome. The protein localises to the centromere. The catalysed reaction is L-lysyl(9)-[histone H3] + 3 S-adenosyl-L-methionine = N(6),N(6),N(6)-trimethyl-L-lysyl(9)-[histone H3] + 3 S-adenosyl-L-homocysteine + 3 H(+). In terms of biological role, histone methyltransferase that specifically trimethylates 'Lys-9' of histone H3 using monomethylated H3 'Lys-9' as substrate. H3 'Lys-9' trimethylation represents a specific tag for epigenetic transcriptional repression by recruiting HP1 (CBX1, CBX3 and/or CBX5) proteins to methylated histones. Mainly functions in heterochromatin regions, thereby playing a central role in the establishment of constitutive heterochromatin at pericentric and telomere regions. H3 'Lys-9' trimethylation is also required to direct DNA methylation at pericentric repeats. SUV39H1 is targeted to histone H3 via its interaction with RB1 and is involved in many processes, such as cell cycle regulation, transcriptional repression and regulation of telomere length. May participate in regulation of higher-order chromatin organization during spermatogenesis. Recruited by the large PER complex to the E-box elements of the circadian target genes such as PER2 itself or PER1, contributes to the conversion of local chromatin to a heterochromatin-like repressive state through H3 'Lys-9' trimethylation. This chain is Histone-lysine N-methyltransferase SUV39H2 (Suv39h2), found in Mus musculus (Mouse).